Here is a 462-residue protein sequence, read N- to C-terminus: Cysteine--tRNA ligase (462 aa).

Cys29 contributes to the Zn(2+) binding site. Residues 31–41 carry the 'HIGH' region motif; it reads MTVYDLCHLGH. Zn(2+) contacts are provided by Cys217, His242, and Glu246. The 'KMSKS' region signature appears at 274-278; that stretch reads KMSKS. Residue Lys277 coordinates ATP.

The protein belongs to the class-I aminoacyl-tRNA synthetase family. Monomer. Zn(2+) is required as a cofactor.

Its subcellular location is the cytoplasm. It catalyses the reaction tRNA(Cys) + L-cysteine + ATP = L-cysteinyl-tRNA(Cys) + AMP + diphosphate. This Polaromonas sp. (strain JS666 / ATCC BAA-500) protein is Cysteine--tRNA ligase.